The following is a 452-amino-acid chain: Exodeoxyribonuclease 7 large subunit (452 aa).

This sequence belongs to the XseA family. Heterooligomer composed of large and small subunits.

It is found in the cytoplasm. The enzyme catalyses Exonucleolytic cleavage in either 5'- to 3'- or 3'- to 5'-direction to yield nucleoside 5'-phosphates.. Functionally, bidirectionally degrades single-stranded DNA into large acid-insoluble oligonucleotides, which are then degraded further into small acid-soluble oligonucleotides. The sequence is that of Exodeoxyribonuclease 7 large subunit from Bacillus cereus (strain ATCC 10987 / NRS 248).